A 178-amino-acid chain; its full sequence is Matrix-remodeling-associated protein 7 (178 aa).

Residues 7 to 27 (LLAALPALVTALALLLAWLLL) form a helical membrane-spanning segment. A disordered region spans residues 33-121 (RVPAPESTAS…AFSFKYSPGQ (89 aa)). A compositionally biased stretch (pro residues) spans 48–65 (APAPPEPPESCAPEPAPE). The span at 76-85 (PEESEAEEPA) shows a compositional bias: acidic residues. Serine 79 and serine 165 each carry phosphoserine.

It localises to the membrane. In Mus musculus (Mouse), this protein is Matrix-remodeling-associated protein 7 (Mxra7).